The following is a 172-amino-acid chain: Ribosome maturation factor RimM (172 aa).

The PRC barrel domain occupies E94 to M167.

The protein belongs to the RimM family. Binds ribosomal protein uS19.

It localises to the cytoplasm. Its function is as follows. An accessory protein needed during the final step in the assembly of 30S ribosomal subunit, possibly for assembly of the head region. Essential for efficient processing of 16S rRNA. May be needed both before and after RbfA during the maturation of 16S rRNA. It has affinity for free ribosomal 30S subunits but not for 70S ribosomes. This chain is Ribosome maturation factor RimM, found in Carboxydothermus hydrogenoformans (strain ATCC BAA-161 / DSM 6008 / Z-2901).